The following is a 1195-amino-acid chain: Voltage-gated inwardly rectifying potassium channel KCNH7 (1195 aa).

Over 1-412 (MPVRRGHVAP…YSPFKAVWDW (412 aa)) the chain is Cytoplasmic. In terms of domain architecture, PAS spans 41-70 (IIYCNDGFCEMTGFSRPDVMQKPCTCDFLH). A PAC domain is found at 92-144 (RKVEVTYYHKNGSTFICNTHIIPVKNQEGVAMMFIINFEYVTDEENAATPERV). At Ser-174 the chain carries Phosphoserine. The tract at residues 194–216 (SVAMKHFKSPTKESCSPSEADDT) is disordered. A phosphoserine mark is found at Ser-238 and Ser-319. The helical transmembrane segment at 413–433 (LILLLVIYTAIFTPYSAAFLL) threads the bilayer. Over 434-449 (NDREEQKRRECGYSCS) the chain is Extracellular. A helical membrane pass occupies residues 450-470 (PLNVVDLIVDIMFIIDILINF). The Cytoplasmic segment spans residues 471 to 494 (RTTYVNQNEEVVSDPAKIAIHYFK). The helical transmembrane segment at 495-515 (GWFLIDMVAAIPFDLLIFGSG) threads the bilayer. The Extracellular portion of the chain corresponds to 516–521 (SDETTT). A helical; Voltage-sensor transmembrane segment spans residues 522-542 (LIGLLKTARLLRLVRVARKLD). Residues 543–549 (RYSEYGA) lie on the Cytoplasmic side of the membrane. The helical transmembrane segment at 550 to 570 (AVLMLLMCIFALIAHWLACIW) threads the bilayer. Residues 571–614 (YAIGNVERPYLTDKIGWLDSLGTQIGKRYNDSDSSSGPSIKDKY) lie on the Extracellular side of the membrane. N-linked (GlcNAc...) asparagine glycosylation occurs at Asn-600. An intramembrane region (pore-forming) is located at residues 615–635 (VTALYFTFSSLTSVGFGNVSP). The Selectivity filter signature appears at 627–632 (SVGFGN). The Extracellular segment spans residues 636-641 (NTNSEK). The chain crosses the membrane as a helical span at residues 642-662 (IFSICVMLIGSLMYASIFGNV). The Cytoplasmic portion of the chain corresponds to 663-1195 (SAIIQRLYSG…HVSDPGLPGK (533 aa)). The interval 745–845 (AFRGASKGCL…IQREDLLEVL (101 aa)) is cNMP-binding domain. The tract at residues 870 to 915 (AKSQSVNDSEGDTGKLRRRRLSFESEGEKDFSKENSANDADDSTDT) is disordered. Residues 890–902 (LSFESEGEKDFSK) are compositionally biased toward basic and acidic residues. Phosphoserine is present on residues Ser-891 and Ser-894. Positions 1027 to 1054 (YGEVEQRLDLLQEQLNRLESQMTTDIQA) form a coiled coil.

Belongs to the potassium channel family. H (Eag) (TC 1.A.1.20) subfamily. Kv11.3/KCNH7 sub-subfamily. The potassium channel is probably composed of a homo- or heterotetrameric complex of pore-forming alpha subunits that can associate only within their subfamily.

It localises to the cell membrane. It catalyses the reaction K(+)(in) = K(+)(out). Its function is as follows. Pore-forming (alpha) subunit of voltage-gated inwardly rectifying potassium channel. Exhibits faster activation and deactivation kinetics and slow inactivation at membrane potentials positive to 240 mV, resulting in the weakest inward rectification. The protein is Voltage-gated inwardly rectifying potassium channel KCNH7 of Mus musculus (Mouse).